A 120-amino-acid chain; its full sequence is Large ribosomal subunit protein uL18 (120 aa).

Belongs to the universal ribosomal protein uL18 family. In terms of assembly, part of the 50S ribosomal subunit; part of the 5S rRNA/L5/L18/L25 subcomplex. Contacts the 5S and 23S rRNAs.

Functionally, this is one of the proteins that bind and probably mediate the attachment of the 5S RNA into the large ribosomal subunit, where it forms part of the central protuberance. This chain is Large ribosomal subunit protein uL18, found in Rhizobium leguminosarum bv. trifolii (strain WSM2304).